The sequence spans 233 residues: Probable chemoreceptor glutamine deamidase CheD (233 aa).

This sequence belongs to the CheD family.

It carries out the reaction L-glutaminyl-[protein] + H2O = L-glutamyl-[protein] + NH4(+). Its function is as follows. Probably deamidates glutamine residues to glutamate on methyl-accepting chemotaxis receptors (MCPs), playing an important role in chemotaxis. The sequence is that of Probable chemoreceptor glutamine deamidase CheD from Ralstonia nicotianae (strain ATCC BAA-1114 / GMI1000) (Ralstonia solanacearum).